The primary structure comprises 456 residues: Armadillo repeat-containing X-linked protein 1 (456 aa).

At Met1–Glu6 the chain is on the mitochondrial intermembrane side. Mitochondrion outer membrane (MOM)-targeting sequence regions lie at residues Met1–Glu6 and Arg26–Lys36. A helical; Signal-anchor membrane pass occupies residues Ala7–Trp29. Topologically, residues Gly30–Leu456 are cytoplasmic. Disordered regions lie at residues Leu37–Gly106 and Arg139–Thr186. Residues Trp38 to Glu50 show a composition bias toward acidic residues. Basic and acidic residues-rich tracts occupy residues Lys51–Lys62 and Lys72–Val81. Over residues Ser162–Ser180 the composition is skewed to basic residues. ARM repeat units lie at residues Pro198–Ala238, Ser240–Val279, Pro361–Asp401, and Ser418–Leu456.

The protein belongs to the eutherian X-chromosome-specific Armcx family. Interacts with MIRO1. As to expression, widely expressed in the adult nervous tissue, especially in the forebrain, including the cerebral cortex, hippocampus and thalamus.

It is found in the mitochondrion. It localises to the mitochondrion outer membrane. In terms of biological role, regulates mitochondrial transport during axon regeneration. Increases the proportion of motile mitochondria by recruiting stationary mitochondria into the motile pool. Enhances mitochondria movement and neurite growth in both adult axons and embryonic neurons. Promotes neuronal survival and axon regeneration after nerve injury. May link mitochondria to the Trak1-kinesin motor complex via its interaction with Miro1. The polypeptide is Armadillo repeat-containing X-linked protein 1 (Armcx1) (Mus musculus (Mouse)).